The chain runs to 590 residues: Glutamine--tRNA ligase (590 aa).

The 'HIGH' region motif lies at 55-65; the sequence is PEPNGYLHIGH. ATP contacts are provided by residues 56–58 and 62–68; these read EPN and HIGHAKS. Residues aspartate 93 and tyrosine 238 each coordinate L-glutamine. ATP-binding positions include threonine 257 and 292-293; that span reads RL. A 'KMSKS' region motif is present at residues 299-303; it reads ITSKR.

The protein belongs to the class-I aminoacyl-tRNA synthetase family. In terms of assembly, monomer.

It is found in the cytoplasm. It catalyses the reaction tRNA(Gln) + L-glutamine + ATP = L-glutaminyl-tRNA(Gln) + AMP + diphosphate. The sequence is that of Glutamine--tRNA ligase from Polynucleobacter necessarius subsp. necessarius (strain STIR1).